The sequence spans 300 residues: Ribosomal protein L11 methyltransferase (300 aa).

S-adenosyl-L-methionine contacts are provided by Thr152, Gly173, Asp195, and Asn234.

Belongs to the methyltransferase superfamily. PrmA family.

It is found in the cytoplasm. It catalyses the reaction L-lysyl-[protein] + 3 S-adenosyl-L-methionine = N(6),N(6),N(6)-trimethyl-L-lysyl-[protein] + 3 S-adenosyl-L-homocysteine + 3 H(+). Methylates ribosomal protein L11. This chain is Ribosomal protein L11 methyltransferase, found in Burkholderia ambifaria (strain MC40-6).